A 78-amino-acid chain; its full sequence is Large ribosomal subunit protein bL28 (78 aa).

This sequence belongs to the bacterial ribosomal protein bL28 family.

This chain is Large ribosomal subunit protein bL28, found in Acaryochloris marina (strain MBIC 11017).